The primary structure comprises 354 residues: Glycerol-3-phosphate dehydrogenase [NAD(+)], glycosomal (354 aa).

Residues Gly-15 to Gly-20, Phe-90, Lys-118, and Ala-150 contribute to the NAD(+) site. Lys-118 is a substrate binding site. The Proton acceptor role is filled by Lys-203. NAD(+)-binding residues include Arg-267 and Glu-293. A substrate-binding site is contributed by Arg-267–Asn-268. The Microbody targeting signal motif lies at Ser-352–Met-354.

The protein belongs to the NAD-dependent glycerol-3-phosphate dehydrogenase family.

The protein resides in the glycosome. It carries out the reaction sn-glycerol 3-phosphate + NAD(+) = dihydroxyacetone phosphate + NADH + H(+). This chain is Glycerol-3-phosphate dehydrogenase [NAD(+)], glycosomal (GPD), found in Trypanosoma brucei rhodesiense.